The primary structure comprises 181 residues: Endoribonuclease YbeY (181 aa).

Residues H115, H119, and H125 each coordinate Zn(2+).

The protein belongs to the endoribonuclease YbeY family. It depends on Zn(2+) as a cofactor.

It is found in the cytoplasm. Functionally, single strand-specific metallo-endoribonuclease involved in late-stage 70S ribosome quality control and in maturation of the 3' terminus of the 16S rRNA. This is Endoribonuclease YbeY from Bifidobacterium animalis subsp. lactis (strain AD011).